Consider the following 194-residue polypeptide: MYQNHKSEILLATPLIKDDIVFTKSVVYLCQNDRHGAMGLIINKPLADTLKDVFEELHIPHTNTFKEILEYPLYMGGPISPHKIMILHTTNGRNYTSTIKLDEGLAITASIDILEDIANNILPEYFLPVVGYSCWTANQLTDEIKSNDWIVTNKLNKKILFNHENKVKWQNHLEHAGYTLQSLDTLFNRNTGNC.

This sequence belongs to the UPF0301 (AlgH) family.

In Francisella tularensis subsp. holarctica (strain OSU18), this protein is UPF0301 protein FTH_1193.